Consider the following 267-residue polypeptide: Glutamate 5-kinase (267 aa).

Lys14 is an ATP binding site. Ser54, Asp141, and Asn157 together coordinate substrate. ATP is bound by residues Ser177–Asp178 and Thr219–Lys225.

The protein belongs to the glutamate 5-kinase family.

Its subcellular location is the cytoplasm. It catalyses the reaction L-glutamate + ATP = L-glutamyl 5-phosphate + ADP. Its pathway is amino-acid biosynthesis; L-proline biosynthesis; L-glutamate 5-semialdehyde from L-glutamate: step 1/2. Catalyzes the transfer of a phosphate group to glutamate to form L-glutamate 5-phosphate. The protein is Glutamate 5-kinase of Streptococcus thermophilus.